The following is a 185-amino-acid chain: Prorelaxin 1 (185 aa).

Residues 1 to 22 (MSSRFLLQLLGFWLLLSQPCRT) form the signal peptide. Intrachain disulfides connect C36–C171, C48–C185, and C170–C175. Residues 58 to 156 (SQEEPALLAR…LKYLQSDTHS (99 aa)) constitute a propeptide, connecting peptide. The interval 135–161 (RLGEAEDGSPPGLKYLQSDTHSRKKRE) is disordered.

Belongs to the insulin family. In terms of assembly, heterodimer of a B chain and an A chain linked by two disulfide bonds.

It is found in the secreted. Its function is as follows. Relaxin is an ovarian hormone that acts with estrogen to produce dilatation of the birth canal in many mammals. The sequence is that of Prorelaxin 1 (Rln1) from Mus musculus (Mouse).